The primary structure comprises 394 residues: Elongation factor Tu (394 aa).

The 196-residue stretch at 10–205 folds into the tr-type G domain; sequence KPHMNVGTIG…TMDNYFDLPQ (196 aa). The G1 stretch occupies residues 19–26; sequence GHVDHGKT. 19-26 contacts GTP; that stretch reads GHVDHGKT. Mg(2+) is bound at residue Thr26. The G2 stretch occupies residues 61–65; the sequence is GITIN. The G3 stretch occupies residues 82-85; that stretch reads DCPG. Residues 82–86 and 137–140 each bind GTP; these read DCPGH and NKLD. The tract at residues 137-140 is G4; the sequence is NKLD. A G5 region spans residues 173 to 175; sequence SAF.

The protein belongs to the TRAFAC class translation factor GTPase superfamily. Classic translation factor GTPase family. EF-Tu/EF-1A subfamily. In terms of assembly, monomer.

The protein localises to the cytoplasm. The catalysed reaction is GTP + H2O = GDP + phosphate + H(+). GTP hydrolase that promotes the GTP-dependent binding of aminoacyl-tRNA to the A-site of ribosomes during protein biosynthesis. This Borrelia turicatae (strain 91E135) protein is Elongation factor Tu.